The primary structure comprises 152 residues: Deoxyuridine 5'-triphosphate nucleotidohydrolase (152 aa).

Substrate contacts are provided by residues 71–73, asparagine 84, 88–90, and methionine 98; these read RSG and LID.

It belongs to the dUTPase family. Mg(2+) is required as a cofactor.

It carries out the reaction dUTP + H2O = dUMP + diphosphate + H(+). The protein operates within pyrimidine metabolism; dUMP biosynthesis; dUMP from dCTP (dUTP route): step 2/2. This enzyme is involved in nucleotide metabolism: it produces dUMP, the immediate precursor of thymidine nucleotides and it decreases the intracellular concentration of dUTP so that uracil cannot be incorporated into DNA. In Cronobacter sakazakii (strain ATCC BAA-894) (Enterobacter sakazakii), this protein is Deoxyuridine 5'-triphosphate nucleotidohydrolase.